A 402-amino-acid chain; its full sequence is uncharacterized protein (402 aa).

Topologically, residues 1–11 (MTPSNYQRTRW) are cytoplasmic. The helical transmembrane segment at 12–34 (LTLIGTIITQFALGSVYTWSLFN) threads the bilayer. Residues 35–43 (GALSAKLDA) lie on the Periplasmic side of the membrane. The helical transmembrane segment at 44 to 66 (PVSQVAFSFGLLSLGLAISSSVA) threads the bilayer. Topologically, residues 67-72 (GKLQER) are cytoplasmic. Residues 73–95 (FGVKRVTMASGILLGLGFFLTAH) form a helical membrane-spanning segment. The Periplasmic portion of the chain corresponds to 96–99 (SDNL). Residues 100 to 122 (MMLWLSAGVLVGLADGAGYLLTL) traverse the membrane as a helical segment. Topologically, residues 123 to 134 (SNCVKWFPERKG) are cytoplasmic. Residues 135–154 (LISAFAIGSYGLGSLGFKFI) form a helical membrane-spanning segment. Over 155–168 (DTQLLETVGLEKTF) the chain is Periplasmic. Residues 169–186 (VIWGAIALLMIVFGATLM) form a helical membrane-spanning segment. The Cytoplasmic segment spans residues 187–216 (KDAPKQEVKTSNGVVEKDYTLAESMRKPQY). Residues 217–236 (WMLAVMFLTACMSGLYVIGV) traverse the membrane as a helical segment. Residues 237–250 (AKDIAQSLAHLDVV) are Periplasmic-facing. A helical membrane pass occupies residues 251 to 273 (SAANAVTVISIANLSGRLVLGIL). Over 274–279 (SDKIAR) the chain is Cytoplasmic. Residues 280–302 (IRVITIGQVISLVGMAALLFAPL) traverse the membrane as a helical segment. Residues 303–306 (NAVT) lie on the Periplasmic side of the membrane. The helical transmembrane segment at 307–329 (FFAAIACVAFNFGGTITVFPSLV) threads the bilayer. Residues 330–341 (SEFFGLNNLAKN) lie on the Cytoplasmic side of the membrane. The helical transmembrane segment at 342–364 (YGVIYLGFGIGSICGSIIASLFG) threads the bilayer. At 365–367 (GFY) the chain is on the periplasmic side. Residues 368-387 (VTFYVIFALLILSLALSTTI) form a helical membrane-spanning segment. Residues 388-402 (RQPEQKMLREAHGSL) are Cytoplasmic-facing.

This sequence belongs to the major facilitator superfamily. Interacts with BtsS and YpdA.

The protein localises to the cell inner membrane. Functionally, part of a nutrient-sensing regulatory network composed of the two-component regulatory systems BtsS/BtsR and YpdA/YpdB, and their respective target proteins, BtsT and YhjX. This is an uncharacterized protein from Escherichia coli (strain K12).